A 482-amino-acid chain; its full sequence is L-propargylglycine--L-glutamate ligase (482 aa).

It carries out the reaction L-propargylglycine + L-glutamate + ATP = L-gamma-glutamyl-L-propargylglycine + ADP + phosphate + H(+). It functions in the pathway amino-acid metabolism. The protein operates within antibiotic biosynthesis. Its function is as follows. Involved in the biosynthesis of terminal alkyne-containing amino acids such as L-beta-ethynylserine, that are produced as antibiotics by S.cattleya. Catalyzes the ATP-dependent ligation of L-propargylglycine to L-glutamate to form the dipeptide L-gamma-glutamyl-L-propargylglycine. Is selective for L-propargylglycine over norvaline, allylglycine and the standard proteinogenic amino acids, except L-cysteine which can be used as a substrate to a lesser extent. This is L-propargylglycine--L-glutamate ligase from Streptantibioticus cattleyicolor (strain ATCC 35852 / DSM 46488 / JCM 4925 / NBRC 14057 / NRRL 8057) (Streptomyces cattleya).